The chain runs to 345 residues: Arginine-hydroxylase NDUFAF5, mitochondrial (345 aa).

Residues 1 to 36 constitute a mitochondrion transit peptide; that stretch reads MLRPAGLWRLCRRPWAARVPAENLGRREVTSGVSPR.

Belongs to the methyltransferase superfamily. As to quaternary structure, interacts with NDUFAF8, leading to stabilize NDUFAF5. Interacts with NDUFS7. Interacts with PYURF (via TRM112 domain); the interaction is direct and stabilizes NDUFAF5 protein.

The protein resides in the mitochondrion inner membrane. Functionally, arginine hydroxylase that mediates hydroxylation of 'Arg-111' of NDUFS7 and is involved in the assembly of mitochondrial NADH:ubiquinone oxidoreductase complex (complex I, MT-ND1) at early stages. May also have methyltransferase activity. This is Arginine-hydroxylase NDUFAF5, mitochondrial from Homo sapiens (Human).